A 601-amino-acid polypeptide reads, in one-letter code: Elongation factor 4 (601 aa).

The 183-residue stretch at 5–187 folds into the tr-type G domain; it reads EHIRNFSIIA…AIVERLPAPE (183 aa). GTP is bound by residues 17-22 and 134-137; these read DHGKST and NKID.

This sequence belongs to the TRAFAC class translation factor GTPase superfamily. Classic translation factor GTPase family. LepA subfamily.

It is found in the cell inner membrane. The enzyme catalyses GTP + H2O = GDP + phosphate + H(+). Functionally, required for accurate and efficient protein synthesis under certain stress conditions. May act as a fidelity factor of the translation reaction, by catalyzing a one-codon backward translocation of tRNAs on improperly translocated ribosomes. Back-translocation proceeds from a post-translocation (POST) complex to a pre-translocation (PRE) complex, thus giving elongation factor G a second chance to translocate the tRNAs correctly. Binds to ribosomes in a GTP-dependent manner. This Nitratidesulfovibrio vulgaris (strain ATCC 29579 / DSM 644 / CCUG 34227 / NCIMB 8303 / VKM B-1760 / Hildenborough) (Desulfovibrio vulgaris) protein is Elongation factor 4.